A 264-amino-acid chain; its full sequence is Purine nucleoside phosphorylase slr1573 (264 aa).

Residues His-61, Cys-104, and His-121 each coordinate Zn(2+).

This sequence belongs to the purine nucleoside phosphorylase YfiH/LACC1 family. Homodimer. Cu(2+) serves as cofactor. Zn(2+) is required as a cofactor.

It catalyses the reaction adenosine + phosphate = alpha-D-ribose 1-phosphate + adenine. The enzyme catalyses S-methyl-5'-thioadenosine + phosphate = 5-(methylsulfanyl)-alpha-D-ribose 1-phosphate + adenine. It carries out the reaction inosine + phosphate = alpha-D-ribose 1-phosphate + hypoxanthine. The catalysed reaction is adenosine + H2O + H(+) = inosine + NH4(+). Purine nucleoside enzyme that catalyzes the phosphorolysis of adenosine and inosine nucleosides, yielding D-ribose 1-phosphate and the respective free bases, adenine and hypoxanthine. Also catalyzes the phosphorolysis of S-methyl-5'-thioadenosine into adenine and S-methyl-5-thio-alpha-D-ribose 1-phosphate. Also has adenosine deaminase activity. The protein is Purine nucleoside phosphorylase slr1573 of Synechocystis sp. (strain ATCC 27184 / PCC 6803 / Kazusa).